A 33-amino-acid chain; its full sequence is uncharacterized protein (33 aa).

The helical transmembrane segment at 11–31 threads the bilayer; sequence LALVIYMSVVLLLMVGVPLLF.

It localises to the membrane. This is an uncharacterized protein from Saccharomyces cerevisiae (strain ATCC 204508 / S288c) (Baker's yeast).